A 159-amino-acid chain; its full sequence is MAHTRGISGLVGKLVMETEVNCNADKYYQIYKHHEDLPSAIPHIVTSAKAVEGHGTTSGCVKEWGYMHEGKTLTCKEKTTYNDETRTICHSISEGDLMNDYKKFDATLVVDPKDNGHGSIVKYILDYEKINEDSPVPIHYLALCNQATEDLNTYLCASV.

This sequence belongs to the MLP family. As to expression, laticifer.

It is found in the vacuole. Its subcellular location is the cytoplasmic vesicle. Not known; MLPs constitute up to 50% of the soluble latex protein. This chain is Major latex protein 149 (MLP149), found in Papaver somniferum (Opium poppy).